Reading from the N-terminus, the 976-residue chain is Probable outer membrane protein PmpA (976 aa).

A signal peptide spans 1–50 (MNQVIKTIALCYQKYISRASNKTFSIHNTLSLSLLPKCLLGSLIIYTSHA). One can recognise an Autotransporter domain in the interval 671-976 (GNAIPNSLWS…SLSCGGYVGF (306 aa)).

The protein belongs to the PMP outer membrane protein family.

Its subcellular location is the secreted. It is found in the cell wall. It localises to the cell outer membrane. The chain is Probable outer membrane protein PmpA (pmpA) from Chlamydia muridarum (strain MoPn / Nigg).